The following is a 438-amino-acid chain: Terminase, large subunit (438 aa).

A Walker A motif motif is present at residues Ser-62–Ser-68. A Walker B motif motif is present at residues Phe-150–Glu-155. The active-site For ATPase activity is the Glu-155. Residues Asp-286, Asp-342, and Asp-418 each coordinate Mg(2+).

This sequence belongs to the Tequatrovirus large terminase family. As to quaternary structure, interacts with the terminase small subunit; the active complex is probably heterooligomeric. Interacts with the portal protein. Mg(2+) serves as cofactor.

The terminase large subunit acts as an ATP driven molecular motor necessary for viral DNA translocation into empty capsids and as an endonuclease that cuts the viral genome to initiate and to end a packaging reaction The terminase lies at a unique vertex of the procapsid and is composed of two subunits, a small terminase subunit involved in viral DNA recognition (packaging sequence), and a large terminase subunit possessing endonucleolytic and ATPase activities. Both terminase subunits heterooligomerize and are docked on the portal protein to form the packaging machine. The terminase large subunit exhibits endonuclease activity and cleaves the viral genome concatemer. Direct long terminal repeats at each end of the genome are duplicated in concert with packaging. Once the capsid is packaged with the DNA, the terminase complex is substituted by the tail. The chain is Terminase, large subunit from Escherichia phage T5 (Enterobacteria phage T5).